The chain runs to 528 residues: Na(+)/H(+) antiporter NhaB (528 aa).

Helical transmembrane passes span 28–50 (FLVI…VLVV), 67–87 (PGGL…SQVL), 98–118 (LLLV…LFVF), 140–160 (AFLS…AVAV), 240–260 (FFLR…FTCF), 305–325 (ALIG…VGLI), 350–370 (EEAL…GVII), 391–411 (LVIF…VFVG), 449–469 (ATPN…APLI), and 476–496 (MVWM…MAIE).

This sequence belongs to the NhaB Na(+)/H(+) (TC 2.A.34) antiporter family.

The protein resides in the cell inner membrane. The catalysed reaction is 2 Na(+)(in) + 3 H(+)(out) = 2 Na(+)(out) + 3 H(+)(in). In terms of biological role, na(+)/H(+) antiporter that extrudes sodium in exchange for external protons. The protein is Na(+)/H(+) antiporter NhaB of Shewanella frigidimarina (strain NCIMB 400).